The sequence spans 535 residues: Sterol 26-hydroxylase, mitochondrial (535 aa).

A mitochondrion-targeting transit peptide spans 1-36; sequence MAALGCARLRWALLGPRVAGCGLCPQGARAKAAIPT. N6-acetyllysine is present on Lys-286. Positions 387 to 401 are sterol-binding; it reads PLLKAVLKETLRLYP. Cys-480 is a binding site for heme. An N6-acetyllysine modification is found at Lys-524.

This sequence belongs to the cytochrome P450 family. As to quaternary structure, interacts with HSP70; this interaction is required for initial targeting to mitochondria. Requires heme as cofactor. Expressed in all tissues tested. Highest expression in liver and duodenum, followed by adrenal gland and lung. Low expression in kidney and spleen.

The protein resides in the mitochondrion inner membrane. The catalysed reaction is 5beta-cholestane-3alpha,7alpha,12alpha-triol + 6 reduced [adrenodoxin] + 3 O2 + 5 H(+) = (25R)-3alpha,7alpha,12alpha-trihydroxy-5beta-cholestan-26-oate + 6 oxidized [adrenodoxin] + 4 H2O. The enzyme catalyses cholestanol + 2 reduced [adrenodoxin] + O2 + 2 H(+) = (25R)-26-hydroxycholestanol + 2 oxidized [adrenodoxin] + H2O. It carries out the reaction (25R)-3beta-hydroxycholest-5-en-7-one-26-al + 2 reduced [adrenodoxin] + O2 + H(+) = (25R)-3beta-hydroxycholest-5-en-7-one-26-oate + 2 oxidized [adrenodoxin] + H2O. It catalyses the reaction (25R)-3beta,26-dihydroxycholest-5-en-7-one + 2 reduced [adrenodoxin] + O2 + 2 H(+) = (25R)-3beta-hydroxycholest-5-en-7-one-26-al + 2 oxidized [adrenodoxin] + 2 H2O. The catalysed reaction is 7-oxocholesterol + 2 reduced [adrenodoxin] + O2 + 2 H(+) = (25R)-3beta,26-dihydroxycholest-5-en-7-one + 2 oxidized [adrenodoxin] + H2O. The enzyme catalyses calciol + 2 reduced [adrenodoxin] + O2 + 2 H(+) = calcidiol + 2 oxidized [adrenodoxin] + H2O. It carries out the reaction (25R)-5beta-cholestane-3alpha,7alpha,12alpha,26-tetrol + 2 reduced [adrenodoxin] + O2 + 2 H(+) = (25R)-3alpha,7alpha,12alpha-trihydroxy-5beta-cholestan-26-al + 2 oxidized [adrenodoxin] + 2 H2O. It catalyses the reaction 2 reduced [adrenodoxin] + cholesterol + O2 + 2 H(+) = (25R)-cholest-5-ene-3beta,26-diol + 2 oxidized [adrenodoxin] + H2O. The catalysed reaction is (25R)-3beta,4beta-dihydroxycholest-5-en-26-al + 2 reduced [adrenodoxin] + O2 + H(+) = (25R)-3beta,4beta-dihydroxycholest-5-en-26-oate + 2 oxidized [adrenodoxin] + H2O. The enzyme catalyses (25R)-4beta,26-dihydroxycholesterol + 2 reduced [adrenodoxin] + O2 + 2 H(+) = (25R)-3beta,4beta-dihydroxycholest-5-en-26-al + 2 oxidized [adrenodoxin] + 2 H2O. It carries out the reaction 4beta-hydroxycholesterol + 2 reduced [adrenodoxin] + O2 + 2 H(+) = (25R)-4beta,26-dihydroxycholesterol + 2 oxidized [adrenodoxin] + H2O. It catalyses the reaction (25R)-3beta-hydroxy-5-cholesten-26-al + 2 reduced [adrenodoxin] + O2 + H(+) = (25R)-3beta-hydroxy-5-cholestenoate + 2 oxidized [adrenodoxin] + H2O. The catalysed reaction is (25R)-cholest-5-ene-3beta,26-diol + 2 reduced [adrenodoxin] + O2 + 2 H(+) = (25R)-3beta-hydroxy-5-cholesten-26-al + 2 oxidized [adrenodoxin] + 2 H2O. The enzyme catalyses (25R)-3alpha,7alpha,12alpha-trihydroxy-5beta-cholestan-26-al + 2 reduced [adrenodoxin] + O2 + H(+) = (25R)-3alpha,7alpha,12alpha-trihydroxy-5beta-cholestan-26-oate + 2 oxidized [adrenodoxin] + H2O. It carries out the reaction 5beta-cholestane-3alpha,7alpha,12alpha-triol + 2 reduced [adrenodoxin] + O2 + 2 H(+) = (25R)-5beta-cholestane-3alpha,7alpha,12alpha,26-tetrol + 2 oxidized [adrenodoxin] + H2O. It functions in the pathway hormone biosynthesis; cholecalciferol biosynthesis. Its pathway is steroid metabolism; cholesterol degradation. It participates in lipid metabolism; bile acid biosynthesis. Its function is as follows. Cytochrome P450 monooxygenase that catalyzes regio- and stereospecific hydroxylation of cholesterol and its derivatives. Hydroxylates (with R stereochemistry) the terminal methyl group of cholesterol side-chain in a three step reaction to yield at first a C26 alcohol, then a C26 aldehyde and finally a C26 acid. Regulates cholesterol homeostasis by catalyzing the conversion of excess cholesterol to bile acids via both the 'neutral' (classic) and the 'acid' (alternative) pathways. May also regulate cholesterol homeostasis via generation of active oxysterols, which act as ligands for NR1H2 and NR1H3 nuclear receptors, modulating the transcription of genes involved in lipid metabolism. Plays a role in cholestanol metabolism in the cerebellum. Similarly to cholesterol, hydroxylates cholestanol and may facilitate sterol diffusion through the blood-brain barrier to the systemic circulation for further degradation. Also hydroxylates retinal 7-ketocholesterol, a noxious oxysterol with pro-inflammatory and pro-apoptotic effects, and may play a role in its elimination from the retinal pigment epithelium. May play a redundant role in vitamin D biosynthesis. Catalyzes 25-hydroxylation of vitamin D3 that is required for its conversion to a functionally active form. The chain is Sterol 26-hydroxylase, mitochondrial (CYP27A1) from Oryctolagus cuniculus (Rabbit).